We begin with the raw amino-acid sequence, 65 residues long: Weak neurotoxin 8 (65 aa).

Disulfide bonds link Cys-3–Cys-24, Cys-6–Cys-11, Cys-17–Cys-42, Cys-46–Cys-57, and Cys-58–Cys-63.

This sequence belongs to the three-finger toxin family. Ancestral subfamily. Orphan group II sub-subfamily. In terms of tissue distribution, expressed by the venom gland.

It is found in the secreted. Its function is as follows. Binds with low affinity to muscular (alpha-1-beta-1-delta-epsilon/CHRNA1-CHRNB1-CHRND-CHRNE) and very low affinity to neuronal (alpha-7/CHRNA7) nicotinic acetylcholine receptor (nAChR). The sequence is that of Weak neurotoxin 8 from Naja naja (Indian cobra).